Here is a 61-residue protein sequence, read N- to C-terminus: uncharacterized protein (61 aa).

Residues 36 to 61 (RLTDVPPQPNSPPDNVFNPDQPRMGP) form a disordered region.

The protein belongs to the ART2/RRT15 family.

This is an uncharacterized protein from Saccharomyces cerevisiae (strain ATCC 204508 / S288c) (Baker's yeast).